A 483-amino-acid chain; its full sequence is Salicylaldehyde dehydrogenase (483 aa).

Residue 228-233 coordinates NAD(+); that stretch reads GSTRVG. Residues glutamate 250 and cysteine 284 contribute to the active site.

The protein belongs to the aldehyde dehydrogenase family.

The enzyme catalyses salicylaldehyde + NAD(+) + H2O = salicylate + NADH + 2 H(+). The protein operates within aromatic compound metabolism; naphthalene degradation. In Pseudomonas putida (Arthrobacter siderocapsulatus), this protein is Salicylaldehyde dehydrogenase (nahF).